Consider the following 269-residue polypeptide: Type II iodothyronine deiodinase (269 aa).

Residues methionine 1–leucine 9 are Lumenal-facing. The chain crosses the membrane as a helical; Signal-anchor for type III membrane protein span at residues isoleucine 10–leucine 34. Topologically, residues lysine 35–aspartate 269 are cytoplasmic. The segment at asparagine 83–glutamine 103 is disordered. Selenocysteine 133 is an active-site residue. Non-standard amino acids (selenocysteine) are located at selenocysteine 133 and selenocysteine 266.

It belongs to the iodothyronine deiodinase family. As to quaternary structure, predominantly monomer. Can form homodimers but homodimerization is not essential for enzyme activity. Interacts with USP20 and USP33. Interacts with MARCHF6. Post-translationally, ubiquitinated by MARCHF6, leading to its degradation by the proteasome. Deubiquitinated by USP20 and USP33. Highly expressed in thyroid, mammary and pituitary glands, then in hypothalamus. Low levels detected in diaphragm, heart, kidney and lung.

The protein resides in the endoplasmic reticulum membrane. It carries out the reaction 3,3',5-triiodo-L-thyronine + iodide + A + H(+) = L-thyroxine + AH2. It catalyses the reaction 3,3'-diiodo-L-thyronine + iodide + A + H(+) = 3,3',5'-triiodo-L-thyronine + AH2. The catalysed reaction is 3'-iodo-L-thyronine + iodide + A + H(+) = 3',5'-diiodo-L-thyronine + AH2. The enzyme catalyses 3,3'-diiodothyronamine + iodide + A + H(+) = 3,3',5'-triiodothyronamine + AH2. It carries out the reaction 3'-iodothyronamine + iodide + A + H(+) = 3',5'-diiodothyronamine + AH2. Plays a crucial role in the metabolism of thyroid hormones (TH) and has specific roles in TH activation and inactivation by deiodination. Catalyzes the deiodination of L-thyroxine (T4) to 3,5,3'-triiodothyronine (T3), 3,3',5'-triiodothyronine (rT3) to 3,3'-diiodothyronine (3,3'-T2) and 3',5'-diiodothyronine (3',5'-T2) to 3'-monoiodothyronine (3'-T1) via outer-ring deiodination (ORD). Catalyzes the phenolic ring deiodinations of 3,3',5'-triiodothyronamine and 3',5'- diiodothyronamine. This is Type II iodothyronine deiodinase (DIO2) from Bos taurus (Bovine).